Reading from the N-terminus, the 259-residue chain is tRNA (guanine-N(7)-)-methyltransferase (259 aa).

A disordered region spans residues 1–74 (MGHHGQMHAQ…PAEDPDRPGP (74 aa)). S-adenosyl-L-methionine contacts are provided by glutamate 91, glutamate 116, asparagine 143, and aspartate 166. Aspartate 166 is an active-site residue. Residues lysine 170, aspartate 202, and 238–241 (TKYE) each bind substrate.

It belongs to the class I-like SAM-binding methyltransferase superfamily. TrmB family.

It catalyses the reaction guanosine(46) in tRNA + S-adenosyl-L-methionine = N(7)-methylguanosine(46) in tRNA + S-adenosyl-L-homocysteine. It participates in tRNA modification; N(7)-methylguanine-tRNA biosynthesis. Functionally, catalyzes the formation of N(7)-methylguanine at position 46 (m7G46) in tRNA. The protein is tRNA (guanine-N(7)-)-methyltransferase of Mycobacterium avium (strain 104).